The primary structure comprises 175 residues: Gamma-crystallin-1 (175 aa).

Beta/gamma crystallin 'Greek key' domains lie at 2 to 40 (GKIFFYEERNFQGRHYECGSDYSDLSSYFNRCNSIRVEG) and 41 to 83 (GNWI…RFLP). The connecting peptide stretch occupies residues 84 to 88 (NYQGQ). Beta/gamma crystallin 'Greek key' domains follow at residues 89–129 (YKMR…NVFD) and 130–172 (GHWM…RRVY).

This sequence belongs to the beta/gamma-crystallin family. Monomer.

In terms of biological role, crystallins are the dominant structural components of the vertebrate eye lens. This is Gamma-crystallin-1 (cryg1) from Xenopus laevis (African clawed frog).